A 166-amino-acid chain; its full sequence is UBA-like domain-containing protein 2 (166 aa).

The interval Q120–R166 is disordered.

It belongs to the UBALD family.

The chain is UBA-like domain-containing protein 2 (ubald2) from Xenopus tropicalis (Western clawed frog).